Reading from the N-terminus, the 418-residue chain is UDP-N-acetylglucosamine 1-carboxyvinyltransferase (418 aa).

22–23 is a binding site for phosphoenolpyruvate; the sequence is KN. R93 lines the UDP-N-acetyl-alpha-D-glucosamine pocket. C117 acts as the Proton donor in catalysis. Residue C117 is modified to 2-(S-cysteinyl)pyruvic acid O-phosphothioketal. UDP-N-acetyl-alpha-D-glucosamine contacts are provided by residues 122–126, D306, and L328; that span reads RPIDL.

The protein belongs to the EPSP synthase family. MurA subfamily.

The protein localises to the cytoplasm. The enzyme catalyses phosphoenolpyruvate + UDP-N-acetyl-alpha-D-glucosamine = UDP-N-acetyl-3-O-(1-carboxyvinyl)-alpha-D-glucosamine + phosphate. The protein operates within cell wall biogenesis; peptidoglycan biosynthesis. Functionally, cell wall formation. Adds enolpyruvyl to UDP-N-acetylglucosamine. The protein is UDP-N-acetylglucosamine 1-carboxyvinyltransferase of Campylobacter hominis (strain ATCC BAA-381 / DSM 21671 / CCUG 45161 / LMG 19568 / NCTC 13146 / CH001A).